The following is a 362-amino-acid chain: MSQVFKVAVLPGDGIGPEVMAEALRVLDAIEKKYDVKFERTHANVGGAGIDLEGKALPETTITICKTSDAILFGSVGGPKWETLPPDEQPERGALLPLRKIFGLYANLRPAIIFPSLTGASSLKEEVIAGGFNVLVIRELTGGIYFAQPKGIEGEGRDRVGFDTMRYSVPEIERITHVAFQAARKRGKKVCSIDKANVLSSSVLWREVVTGIAKEYPDVELSHMYVDNAAMQLVRWPKQFDVILCENMFGDILSDEAAMLTGSLGMLPSASLAEGTFGMYEPSGGSAPDIAGQGIANPIAQILSMGMMLRFSFGMVDAADAIDNAVAKVLDQGCRTRDIFQEKPGEKLVNTKEMGDAIIVAL.

78–91 (GPKWETLPPDEQPE) is an NAD(+) binding site. Substrate is bound by residues R99, R109, R138, and D227. Residues D227, D251, and D255 each contribute to the Mg(2+) site. Position 285 to 297 (285 to 297 (GSAPDIAGQGIAN)) interacts with NAD(+).

This sequence belongs to the isocitrate and isopropylmalate dehydrogenases family. LeuB type 1 subfamily. As to quaternary structure, homodimer. Requires Mg(2+) as cofactor. It depends on Mn(2+) as a cofactor.

The protein localises to the cytoplasm. The enzyme catalyses (2R,3S)-3-isopropylmalate + NAD(+) = 4-methyl-2-oxopentanoate + CO2 + NADH. Its pathway is amino-acid biosynthesis; L-leucine biosynthesis; L-leucine from 3-methyl-2-oxobutanoate: step 3/4. Functionally, catalyzes the oxidation of 3-carboxy-2-hydroxy-4-methylpentanoate (3-isopropylmalate) to 3-carboxy-4-methyl-2-oxopentanoate. The product decarboxylates to 4-methyl-2 oxopentanoate. This Geobacter metallireducens (strain ATCC 53774 / DSM 7210 / GS-15) protein is 3-isopropylmalate dehydrogenase.